Here is a 63-residue protein sequence, read N- to C-terminus: Conotoxin Cl14.11 (63 aa).

An N-terminal signal peptide occupies residues 1-21 (MRFLLLLTVALLLTCIMETDA). The propeptide occupies 22 to 34 (EAKPEDLAERFRE).

In terms of processing, contains 2 disulfide bond. In terms of tissue distribution, expressed by the venom duct.

It localises to the secreted. The protein is Conotoxin Cl14.11 of Californiconus californicus (California cone).